Reading from the N-terminus, the 116-residue chain is Large ribosomal subunit protein uL22c (116 aa).

Belongs to the universal ribosomal protein uL22 family. Part of the 50S ribosomal subunit.

It is found in the plastid. Its subcellular location is the chloroplast. This protein binds specifically to 23S rRNA. In terms of biological role, the globular domain of the protein is located near the polypeptide exit tunnel on the outside of the subunit, while an extended beta-hairpin is found that lines the wall of the exit tunnel in the center of the 70S ribosome. This is Large ribosomal subunit protein uL22c (rpl22) from Psilotum nudum (Whisk fern).